A 379-amino-acid polypeptide reads, in one-letter code: Cobalt-precorrin-5B C(1)-methyltransferase (379 aa).

This sequence belongs to the CbiD family.

It carries out the reaction Co-precorrin-5B + S-adenosyl-L-methionine = Co-precorrin-6A + S-adenosyl-L-homocysteine. It participates in cofactor biosynthesis; adenosylcobalamin biosynthesis; cob(II)yrinate a,c-diamide from sirohydrochlorin (anaerobic route): step 6/10. Functionally, catalyzes the methylation of C-1 in cobalt-precorrin-5B to form cobalt-precorrin-6A. This Salmonella choleraesuis (strain SC-B67) protein is Cobalt-precorrin-5B C(1)-methyltransferase.